We begin with the raw amino-acid sequence, 210 residues long: LexA repressor (210 aa).

A DNA-binding region (H-T-H motif) is located at residues 31–51; it reads RAEISRELGFRSPNAAEEHLK. Active-site for autocatalytic cleavage activity residues include Ser-126 and Lys-163.

It belongs to the peptidase S24 family. In terms of assembly, homodimer.

The catalysed reaction is Hydrolysis of Ala-|-Gly bond in repressor LexA.. Represses a number of genes involved in the response to DNA damage (SOS response), including recA and lexA. In the presence of single-stranded DNA, RecA interacts with LexA causing an autocatalytic cleavage which disrupts the DNA-binding part of LexA, leading to derepression of the SOS regulon and eventually DNA repair. The polypeptide is LexA repressor (Actinobacillus succinogenes (strain ATCC 55618 / DSM 22257 / CCUG 43843 / 130Z)).